A 414-amino-acid chain; its full sequence is 3-oxoacyl-[acyl-carrier-protein] synthase 2 (414 aa).

Positions 4-411 (NKRVVITGMG…GHNAVLVFKK (408 aa)) constitute a Ketosynthase family 3 (KS3) domain. Catalysis depends on for beta-ketoacyl synthase activity residues cysteine 165, histidine 304, and histidine 341.

It belongs to the thiolase-like superfamily. Beta-ketoacyl-ACP synthases family.

It catalyses the reaction a fatty acyl-[ACP] + malonyl-[ACP] + H(+) = a 3-oxoacyl-[ACP] + holo-[ACP] + CO2. The catalysed reaction is (9Z)-hexadecenoyl-[ACP] + malonyl-[ACP] + H(+) = 3-oxo-(11Z)-octadecenoyl-[ACP] + holo-[ACP] + CO2. It participates in lipid metabolism; fatty acid biosynthesis. Involved in the type II fatty acid elongation cycle. Catalyzes the elongation of a wide range of acyl-ACP by the addition of two carbons from malonyl-ACP to an acyl acceptor. Can efficiently catalyze the conversion of palmitoleoyl-ACP (cis-hexadec-9-enoyl-ACP) to cis-vaccenoyl-ACP (cis-octadec-11-enoyl-ACP), an essential step in the thermal regulation of fatty acid composition. The chain is 3-oxoacyl-[acyl-carrier-protein] synthase 2 (fabF) from Staphylococcus aureus (strain MW2).